Here is a 73-residue protein sequence, read N- to C-terminus: Large ribosomal subunit protein bL31 (73 aa).

Belongs to the bacterial ribosomal protein bL31 family. Type A subfamily. In terms of assembly, part of the 50S ribosomal subunit.

In terms of biological role, binds the 23S rRNA. This Sinorhizobium fredii (strain NBRC 101917 / NGR234) protein is Large ribosomal subunit protein bL31.